A 1054-amino-acid chain; its full sequence is Isoleucine--tRNA ligase (1054 aa).

The short motif at 58-68 (PFANGLPHYGH) is the 'HIGH' region element. Positions 627 to 631 (KMSKS) match the 'KMSKS' region motif. Position 630 (Lys-630) interacts with ATP.

Belongs to the class-I aminoacyl-tRNA synthetase family. IleS type 2 subfamily. In terms of assembly, monomer. The cofactor is Zn(2+).

The protein localises to the cytoplasm. It catalyses the reaction tRNA(Ile) + L-isoleucine + ATP = L-isoleucyl-tRNA(Ile) + AMP + diphosphate. Functionally, catalyzes the attachment of isoleucine to tRNA(Ile). As IleRS can inadvertently accommodate and process structurally similar amino acids such as valine, to avoid such errors it has two additional distinct tRNA(Ile)-dependent editing activities. One activity is designated as 'pretransfer' editing and involves the hydrolysis of activated Val-AMP. The other activity is designated 'posttransfer' editing and involves deacylation of mischarged Val-tRNA(Ile). The polypeptide is Isoleucine--tRNA ligase (Corynebacterium efficiens (strain DSM 44549 / YS-314 / AJ 12310 / JCM 11189 / NBRC 100395)).